We begin with the raw amino-acid sequence, 354 residues long: MKIAILPGDGIGPEIIAQAERVLEVLRRDGLKIETEHAPLGGAAYDQYGVPYPEATQKLAREADAVLLGAVGGPAYDKLDRPLRPERGLLAIRKDLNLFANLRPAILYPELANASTLKPEVVAGLDIMIVRELTGDIYFGQPRGIAVNELGEREAYNTMRYSESEVRRIAHVAFGIAMKRNRKLCSVDKANVLETTEFWKEIMIEVAKEYPQVELSHMYVDNAAMQLVRNPKQFDVMVTGNIFGDILSDEASMLTGSIGMLPSASLDQNNKGLYEPSHGSAPDIAGQNLANPLATILSAAMMLRYSFGQEAAARRVEDAVKKVLAQGYRTADIYEAGCEKVSCSGMGDAVVAAM.

73–86 (GPAYDKLDRPLRPE) lines the NAD(+) pocket. Substrate contacts are provided by Arg-93, Arg-103, Arg-131, and Asp-221. Residues Asp-221, Asp-245, and Asp-249 each contribute to the Mg(2+) site. 279–291 (GSAPDIAGQNLAN) is a binding site for NAD(+).

Belongs to the isocitrate and isopropylmalate dehydrogenases family. LeuB type 1 subfamily. As to quaternary structure, homodimer. The cofactor is Mg(2+). Mn(2+) is required as a cofactor.

It is found in the cytoplasm. It carries out the reaction (2R,3S)-3-isopropylmalate + NAD(+) = 4-methyl-2-oxopentanoate + CO2 + NADH. It participates in amino-acid biosynthesis; L-leucine biosynthesis; L-leucine from 3-methyl-2-oxobutanoate: step 3/4. Its function is as follows. Catalyzes the oxidation of 3-carboxy-2-hydroxy-4-methylpentanoate (3-isopropylmalate) to 3-carboxy-4-methyl-2-oxopentanoate. The product decarboxylates to 4-methyl-2 oxopentanoate. The sequence is that of 3-isopropylmalate dehydrogenase from Chromobacterium violaceum (strain ATCC 12472 / DSM 30191 / JCM 1249 / CCUG 213 / NBRC 12614 / NCIMB 9131 / NCTC 9757 / MK).